A 257-amino-acid chain; its full sequence is MAAAAGRLLWSSVARHASAISRSISASTVLRPVASRRTCLTDILWSASAQGKSAFSTSSSFHTPAVTQHAPYFKGTAVVNGEFKELSLDDFKGKYLVLFFYPLDFTFVCPTEIVAFSDKANEFHDVNCEVVAVSVDSHFSHLAWINTPRKNGGLGHMNITLLSDITKQISRDYGVLLESAGIALRGLFIIDPNGVVKHLSVNDLPVGRSVEETLRLVKAFQFVETHGEVCPANWTPESPTIKPSPTASKEYFEKVHQ.

A mitochondrion-targeting transit peptide spans 1–62 (MAAAAGRLLW…SAFSTSSSFH (62 aa)). One can recognise a Thioredoxin domain in the interval 64–222 (PAVTQHAPYF…TLRLVKAFQF (159 aa)). N6-succinyllysine is present on Lys84. Lys92 carries the post-translational modification N6-acetyllysine; alternate. Position 92 is an N6-succinyllysine; alternate (Lys92). Cys109 (cysteine sulfenic acid (-SOH) intermediate) is an active-site residue. The residue at position 147 (Thr147) is a Phosphothreonine.

Belongs to the peroxiredoxin family. AhpC/Prx1 subfamily. As to quaternary structure, homodimer; disulfide-linked, upon oxidation. 6 homodimers assemble to form a ring-like dodecamer. Interacts with NEK6. Interacts with LRRK2. Interacts with MAP3K13. Interacts with RPS6KC1 (via PX domain). Post-translationally, phosphorylated by LRRK2; phosphorylation reduces perodixase activity. The enzyme can be inactivated by further oxidation of the cysteine sulfenic acid (C(P)-SOH) to sulphinic acid (C(P)-SO2H) and sulphonic acid (C(P)-SO3H) instead of its condensation to a disulfide bond. In terms of processing, S-palmitoylated. In terms of tissue distribution, housekeeping-type gene preferentially expressed in murine erythroleukemia (MEL) cells.

Its subcellular location is the mitochondrion. The protein localises to the cytoplasm. The protein resides in the early endosome. It carries out the reaction a hydroperoxide + [thioredoxin]-dithiol = an alcohol + [thioredoxin]-disulfide + H2O. In terms of biological role, thiol-specific peroxidase that catalyzes the reduction of hydrogen peroxide and organic hydroperoxides to water and alcohols, respectively. Plays a role in cell protection against oxidative stress by detoxifying peroxides. Acts synergistically with MAP3K13 to regulate the activation of NF-kappa-B in the cytosol. Required for the maintenance of physical strength. This is Thioredoxin-dependent peroxide reductase, mitochondrial (Prdx3) from Mus musculus (Mouse).